A 293-amino-acid polypeptide reads, in one-letter code: Formamidopyrimidine-DNA glycosylase (293 aa).

The active-site Schiff-base intermediate with DNA is the Pro2. Catalysis depends on Glu3, which acts as the Proton donor. Catalysis depends on Lys61, which acts as the Proton donor; for beta-elimination activity. Positions 104, 123, and 169 each coordinate DNA. An FPG-type zinc finger spans residues 255 to 289; the sequence is DAYGREGEPCRRCGAIMRRDKFMNRSSFYCPRCQP. Arg279 serves as the catalytic Proton donor; for delta-elimination activity.

Belongs to the FPG family. Monomer. Zn(2+) is required as a cofactor.

The enzyme catalyses Hydrolysis of DNA containing ring-opened 7-methylguanine residues, releasing 2,6-diamino-4-hydroxy-5-(N-methyl)formamidopyrimidine.. It carries out the reaction 2'-deoxyribonucleotide-(2'-deoxyribose 5'-phosphate)-2'-deoxyribonucleotide-DNA = a 3'-end 2'-deoxyribonucleotide-(2,3-dehydro-2,3-deoxyribose 5'-phosphate)-DNA + a 5'-end 5'-phospho-2'-deoxyribonucleoside-DNA + H(+). In terms of biological role, involved in base excision repair of DNA damaged by oxidation or by mutagenic agents. Acts as a DNA glycosylase that recognizes and removes damaged bases. Has a preference for oxidized purines, such as 7,8-dihydro-8-oxoguanine (8-oxoG). Has AP (apurinic/apyrimidinic) lyase activity and introduces nicks in the DNA strand. Cleaves the DNA backbone by beta-delta elimination to generate a single-strand break at the site of the removed base with both 3'- and 5'-phosphates. The chain is Formamidopyrimidine-DNA glycosylase from Mycolicibacterium vanbaalenii (strain DSM 7251 / JCM 13017 / BCRC 16820 / KCTC 9966 / NRRL B-24157 / PYR-1) (Mycobacterium vanbaalenii).